Here is a 307-residue protein sequence, read N- to C-terminus: UDP-N-acetylenolpyruvoylglucosamine reductase (307 aa).

The region spanning 33-198 (KVGGPVDILV…LEAILKLSLG (166 aa)) is the FAD-binding PCMH-type domain. Arginine 177 is an active-site residue. Residue serine 227 is the Proton donor of the active site. Glutamate 297 is a catalytic residue.

It belongs to the MurB family. The cofactor is FAD.

Its subcellular location is the cytoplasm. It catalyses the reaction UDP-N-acetyl-alpha-D-muramate + NADP(+) = UDP-N-acetyl-3-O-(1-carboxyvinyl)-alpha-D-glucosamine + NADPH + H(+). It participates in cell wall biogenesis; peptidoglycan biosynthesis. In terms of biological role, cell wall formation. In Clostridium tetani (strain Massachusetts / E88), this protein is UDP-N-acetylenolpyruvoylglucosamine reductase.